A 213-amino-acid polypeptide reads, in one-letter code: Orotate phosphoribosyltransferase (213 aa).

Lys-26 contributes to the 5-phospho-alpha-D-ribose 1-diphosphate binding site. Residue 34–35 (FF) coordinates orotate. Residues 72 to 73 (YK), Arg-99, Lys-100, Lys-103, His-105, and 124 to 132 (DDVITAGTA) contribute to the 5-phospho-alpha-D-ribose 1-diphosphate site. Residues Thr-128 and Arg-156 each coordinate orotate.

It belongs to the purine/pyrimidine phosphoribosyltransferase family. PyrE subfamily. As to quaternary structure, homodimer. Mg(2+) is required as a cofactor.

It carries out the reaction orotidine 5'-phosphate + diphosphate = orotate + 5-phospho-alpha-D-ribose 1-diphosphate. The protein operates within pyrimidine metabolism; UMP biosynthesis via de novo pathway; UMP from orotate: step 1/2. Functionally, catalyzes the transfer of a ribosyl phosphate group from 5-phosphoribose 1-diphosphate to orotate, leading to the formation of orotidine monophosphate (OMP). The protein is Orotate phosphoribosyltransferase of Cronobacter sakazakii (strain ATCC BAA-894) (Enterobacter sakazakii).